The following is an 81-amino-acid chain: Small ribosomal subunit protein bS18 (81 aa).

It belongs to the bacterial ribosomal protein bS18 family. As to quaternary structure, part of the 30S ribosomal subunit. Forms a tight heterodimer with protein bS6.

Binds as a heterodimer with protein bS6 to the central domain of the 16S rRNA, where it helps stabilize the platform of the 30S subunit. This chain is Small ribosomal subunit protein bS18, found in Chlamydia muridarum (strain MoPn / Nigg).